Consider the following 352-residue polypeptide: F-box/kelch-repeat protein SKIP30 (352 aa).

In terms of domain architecture, F-box spans 9–55 (SGLLDGIPEAVALRCLAHVPLHLHPNLELVSRSWRAAIRSHELFRVR). Kelch repeat units follow at residues 57 to 109 (ELRS…TTAG), 110 to 167 (MLFV…VLQG), 168 to 215 (KIVV…LVVN), 243 to 293 (YGWP…MTSL), and 296 to 351 (EVLI…TQLT).

In terms of assembly, part of a SCF (ASK-cullin-F-box) protein ligase complex. Interacts with SKP1A/ASK1.

The protein operates within protein modification; protein ubiquitination. Its function is as follows. Component of SCF(ASK-cullin-F-box) E3 ubiquitin ligase complexes, which may mediate the ubiquitination and subsequent proteasomal degradation of target proteins. This chain is F-box/kelch-repeat protein SKIP30 (SKIP30), found in Arabidopsis thaliana (Mouse-ear cress).